Consider the following 448-residue polypeptide: UPF0210 protein Pars_1033 (448 aa).

Belongs to the UPF0210 family.

The chain is UPF0210 protein Pars_1033 from Pyrobaculum arsenaticum (strain DSM 13514 / JCM 11321 / PZ6).